A 417-amino-acid polypeptide reads, in one-letter code: Serine hydroxymethyltransferase 3 (417 aa).

Residues L121 and 125-127 (GHL) each bind (6S)-5,6,7,8-tetrahydrofolate. K230 is subject to N6-(pyridoxal phosphate)lysine. 355–357 (SPF) provides a ligand contact to (6S)-5,6,7,8-tetrahydrofolate.

It belongs to the SHMT family. In terms of assembly, homodimer. Pyridoxal 5'-phosphate serves as cofactor.

Its subcellular location is the cytoplasm. It catalyses the reaction (6R)-5,10-methylene-5,6,7,8-tetrahydrofolate + glycine + H2O = (6S)-5,6,7,8-tetrahydrofolate + L-serine. The protein operates within one-carbon metabolism; tetrahydrofolate interconversion. It participates in amino-acid biosynthesis; glycine biosynthesis; glycine from L-serine: step 1/1. Functionally, catalyzes the reversible interconversion of serine and glycine with tetrahydrofolate (THF) serving as the one-carbon carrier. This reaction serves as the major source of one-carbon groups required for the biosynthesis of purines, thymidylate, methionine, and other important biomolecules. Also exhibits THF-independent aldolase activity toward beta-hydroxyamino acids, producing glycine and aldehydes, via a retro-aldol mechanism. This is Serine hydroxymethyltransferase 3 from Pseudomonas fluorescens (strain Pf0-1).